The sequence spans 216 residues: MNIILLGPPGAGKGTQAKLISEKYSIPHISTGDIFRKNISNKTPLGMEAKSYMDKGQLVPDELTIEIVKDRLGEEDCKNGFLLDGFPRTVKQAEALDEFLQNKSSKTDAALLIDVPQELILERMTGRRVCGECGASYHIKFITPKTEGVCDLCGGKLVQRKDDTKETVLERLEVYSKQTQPLIEYYKNKNVLLALDGTKEKNEVFENISNVLGAIN.

10 to 15 lines the ATP pocket; it reads GAGKGT. Positions 30–59 are NMP; sequence STGDIFRKNISNKTPLGMEAKSYMDKGQLV. Residues T31, R36, 57 to 59, 85 to 88, and Q92 contribute to the AMP site; these read QLV and GFPR. The LID stretch occupies residues 126–163; it reads GRRVCGECGASYHIKFITPKTEGVCDLCGGKLVQRKDD. R127 is an ATP binding site. Zn(2+) is bound by residues C130 and C133. Residue 136-137 coordinates ATP; it reads SY. Zn(2+)-binding residues include C150 and C153. 2 residues coordinate AMP: R160 and R171. Residue K199 participates in ATP binding.

It belongs to the adenylate kinase family. In terms of assembly, monomer.

It is found in the cytoplasm. It catalyses the reaction AMP + ATP = 2 ADP. The protein operates within purine metabolism; AMP biosynthesis via salvage pathway; AMP from ADP: step 1/1. Functionally, catalyzes the reversible transfer of the terminal phosphate group between ATP and AMP. Plays an important role in cellular energy homeostasis and in adenine nucleotide metabolism. The sequence is that of Adenylate kinase from Clostridium tetani (strain Massachusetts / E88).